We begin with the raw amino-acid sequence, 682 residues long: Potassium-transporting ATPase ATP-binding subunit (682 aa).

Helical transmembrane passes span Pro-34–Ala-54, Ala-62–Ala-82, Ile-219–Leu-239, and Val-254–Ile-274. The 4-aspartylphosphate intermediate role is filled by Asp-307. Residues Asp-344, Glu-348, Phe-377–Ser-384, and Lys-395 contribute to the ATP site. Mg(2+)-binding residues include Asp-518 and Asp-522. Transmembrane regions (helical) follow at residues Phe-588 to Met-608, Ala-616 to Leu-636, and Ile-656 to Leu-676.

The protein belongs to the cation transport ATPase (P-type) (TC 3.A.3) family. Type IA subfamily. As to quaternary structure, the system is composed of three essential subunits: KdpA, KdpB and KdpC.

It localises to the cell inner membrane. The enzyme catalyses K(+)(out) + ATP + H2O = K(+)(in) + ADP + phosphate + H(+). Part of the high-affinity ATP-driven potassium transport (or Kdp) system, which catalyzes the hydrolysis of ATP coupled with the electrogenic transport of potassium into the cytoplasm. This subunit is responsible for energy coupling to the transport system and for the release of the potassium ions to the cytoplasm. In Escherichia coli (strain K12 / MC4100 / BW2952), this protein is Potassium-transporting ATPase ATP-binding subunit.